A 211-amino-acid chain; its full sequence is Fucoxanthin-chlorophyll a-c binding protein F, chloroplastic (211 aa).

The N-terminal 33 residues, 1–33, are a transit peptide targeting the chloroplast; that stretch reads AIACAAAPGLRGPSAFNGAALSTPAKSSSAMKM. Transmembrane regions (helical) follow at residues 75 to 95, 116 to 136, and 177 to 197; these read IAML…PGML, IPPG…LAVM, and GRAA…SNQP.

Belongs to the fucoxanthin chlorophyll protein family. In terms of assembly, the LHC complex of chromophytic algae is composed of fucoxanthin, chlorophyll A and C bound non-covalently by fucoxanthin chlorophyll proteins (FCPs). The ratio of pigments in this LHC is; fucoxanthin: chlorophyll C: chlorophyll A; (0.6-1): (0.1-0.3): (1).

It is found in the plastid. Its subcellular location is the chloroplast thylakoid membrane. The light-harvesting complex (LHC) functions as a light receptor, it captures and delivers excitation energy to photosystems with which it is closely associated. Energy is transferred from the carotenoid and chlorophyll C (or B) to chlorophyll A and the photosynthetic reaction centers where it is used to synthesize ATP and reducing power. The protein is Fucoxanthin-chlorophyll a-c binding protein F, chloroplastic (FCPF) of Macrocystis pyrifera (Giant kelp).